A 306-amino-acid chain; its full sequence is HTH-type transcriptional regulator AlkR (306 aa).

An HTH araC/xylS-type domain is found at 207-305; it reads SNALAAIHAY…EQSPKHYRQQ (99 aa). 2 consecutive DNA-binding regions (H-T-H motif) follow at residues 224–245 and 272–295; these read ESLA…QSIV and IQQI…KRQF.

Its pathway is hydrocarbon metabolism; alkane degradation. This protein activates the expression of the alkane 1-monooxygenase AlkM. This Acinetobacter baylyi (strain ATCC 33305 / BD413 / ADP1) protein is HTH-type transcriptional regulator AlkR (alkR).